The primary structure comprises 406 residues: Solanesyl diphosphate synthase 1, chloroplastic (406 aa).

The N-terminal 71 residues, 1–71, are a transit peptide targeting the chloroplast; that stretch reads MMTSCRNIDL…NGIGQSQTVS (71 aa). Residues K126, R129, and H164 each coordinate isopentenyl diphosphate. Positions 171 and 175 each coordinate Mg(2+). An an all-trans-polyprenyl diphosphate-binding site is contributed by R180. Isopentenyl diphosphate is bound at residue R181. The an all-trans-polyprenyl diphosphate site is built by K257, T258, Q295, and K312.

This sequence belongs to the FPP/GGPP synthase family. Homodimer. Interacts with FBN5. Requires Mg(2+) as cofactor. In terms of tissue distribution, higher expression in leaves than in roots.

The protein localises to the plastid. It localises to the chloroplast. It catalyses the reaction 5 isopentenyl diphosphate + (2E,6E,10E)-geranylgeranyl diphosphate = all-trans-nonaprenyl diphosphate + 5 diphosphate. The catalysed reaction is isopentenyl diphosphate + (2E,6E)-farnesyl diphosphate = (2E,6E,10E)-geranylgeranyl diphosphate + diphosphate. Functionally, involved in providing solanesyl diphosphate for plastoquinone-9 (PQ-9) formation in plastids. Catalyzes the elongation of the prenyl side chain of PQ-9 in plastids. Contributes to the biosynthesis of plastochromanol-8 (PC-8) in plastids. Does not contribute to the synthesis of tocopherol or ubiquinone. PQ-9 and PC-8 are lipophilic antioxidants that act as protectant against photooxidative stress under high light stress conditions. Prefers geranylgeranyl diphosphate to farnesyl diphosphate as substrate. No activity with geranyl diphosphate or dimethylallyl diphosphate as substrate. The protein is Solanesyl diphosphate synthase 1, chloroplastic of Arabidopsis thaliana (Mouse-ear cress).